Reading from the N-terminus, the 660-residue chain is Neurexin-2-beta (660 aa).

Positions 1–10 are enriched in gly residues; it reads MPPGGSGQGG. The interval 1-27 is disordered; that stretch reads MPPGGSGQGGCPRRPPALAGPLPPPPP. An N-terminal signal peptide occupies residues 1–46; that stretch reads MPPGGSGQGGCPRRPPALAGPLPPPPPPPPLPLLLGLLLLLGAAEG. The Extracellular segment spans residues 47–584; the sequence is ARVSSSLSTT…EVIRESSSTT (538 aa). The Laminin G-like domain occupies 87–295; sequence TTYIFGKGGA…HLRLVGEGPS (209 aa). D139 and V156 together coordinate Ca(2+). Residue N186 is glycosylated (N-linked (GlcNAc...) asparagine). Ca(2+)-binding residues include I238 and N240. S350 is a glycosylation site (O-linked (Xyl...) (heparan sulfate) serine). Disordered stretches follow at residues 408–458 and 537–571; these read ATQD…LPPT and EPRRPPPLRPGVTSAPGFPRLPTANPTGPGERGPP. Residue N561 is glycosylated (N-linked (GlcNAc...) asparagine). Residues 585–605 form a helical membrane-spanning segment; it reads GMVVGIVAAAALCILILLYAM. The Cytoplasmic portion of the chain corresponds to 606 to 660; that stretch reads YKYRNRDEGSYQVDQSRNYISNSAQSNGAVVKEKAPAAPKTPSKAKKNKDKEYYV. The disordered stretch occupies residues 627–660; that stretch reads NSAQSNGAVVKEKAPAAPKTPSKAKKNKDKEYYV.

The protein belongs to the neurexin family. In terms of assembly, interacts (via cytoplasmic C-terminal region) with CASK. Specific isoforms bind alpha-dystroglycan and neuroligins NLGN1, NLGN2 and NLGN3. Interacts with CBLN1, CBLN2 and, less avidly, with CBLN4. Interacts with CLSTN3. O-glycosylated; contains heparan sulfate. Heparan sulfate attachment is required for synapse development by mediating interactions with neuroligins.

It is found in the presynaptic cell membrane. In terms of biological role, neuronal cell surface protein that may be involved in cell recognition and cell adhesion. The sequence is that of Neurexin-2-beta from Mus musculus (Mouse).